The chain runs to 362 residues: Salactin (362 aa).

Acidic residues predominate over residues 1 to 10 (MSDDTEDDSG). The disordered stretch occupies residues 1–28 (MSDDTEDDSGGESTADMEFGEQPAPLGV).

Forms dynamically unstable filaments. Monomers are added at the growing filament end. In vitro, salactin polymerizes in the presence of ATP and AMP-PNP but not in the presence of ADP, GTP, ATPgammaS or buffer alone.

It localises to the cytoplasm. Actin homolog which might be involved in partitioning DNA between daughter cells when chromosomal copy number is low. The chain is Salactin from Halobacterium salinarum (strain ATCC 700922 / JCM 11081 / NRC-1) (Halobacterium halobium).